A 193-amino-acid polypeptide reads, in one-letter code: Probable 3' cyclic ADP-D-ribose synthase ThsB' (193 aa).

As to quaternary structure, homodimer.

It carries out the reaction NAD(+) = 3'cADPR + nicotinamide + H(+). In terms of biological role, TIR-like domain-containing component of the Thoeris antiviral defense system, composed of ThsA and ThsB and ThsB'. In the presence of NAD(+) produces a signaling molecule that activates cognate ThsA (AC J8G6Z1) to hydrolyze NAD(+). The signaling molecule is a cyclic ADP-D-ribose isomer and may be 3' cyclic ADP-D-ribose (3'cADPR); it is not 2'cADPR. This is Probable 3' cyclic ADP-D-ribose synthase ThsB' from Bacillus cereus (strain MSX-D12).